We begin with the raw amino-acid sequence, 295 residues long: Dehydrodolichyl diphosphate synthase 6 (295 aa).

Belongs to the UPP synthase family. Requires Mg(2+) as cofactor.

Its pathway is protein modification; protein glycosylation. Functionally, catalyzes cis-prenyl chain elongation to produce the polyprenyl backbone of dolichol, a glycosyl carrier-lipid required for the biosynthesis of several classes of glycoprotein. The protein is Dehydrodolichyl diphosphate synthase 6 of Arabidopsis thaliana (Mouse-ear cress).